The primary structure comprises 641 residues: Pre-mRNA-processing factor 39 (641 aa).

The tract at residues 1-50 (MEKSPEHCAEGSPSPATESAPSATEPPLPSTEPPLPSTEPPLPSTEPPLP) is disordered. The segment covering 10 to 23 (EGSPSPATESAPSA) has biased composition (low complexity). Residues 24-50 (TEPPLPSTEPPLPSTEPPLPSTEPPLP) are compositionally biased toward pro residues. HAT repeat units follow at residues 50–82 (PPLPPDFEKYWKSVQAYPEDFNTWTYLLQYVEQ), 84–116 (NHLFAARKAFDAFLAHYPYCYGYWKKYADLEKK), 118–150 (NNILEADEVYRRGIQAITLSVDLWMHYLNFLKE), 158–193 (ETSLTLRGTFEHAVVSAGLDFRSDKLWEMYINWETE), 304–336 (NFEEEIKRPYFHVKPLEKAQLNNWKEYLEFELE), 338–370 (GSNERIVILFERCVIACACYEEFWIKYAKYMEN), and 372–407 (SVEGVRHVYNRACHVHLAKKPMVHLLWAAFEEQQGN).

It belongs to the PRP39 family.

It is found in the nucleus. Involved in pre-mRNA splicing. The protein is Pre-mRNA-processing factor 39 (prpf39) of Xenopus laevis (African clawed frog).